We begin with the raw amino-acid sequence, 557 residues long: Multidrug transporter FLR1 (557 aa).

Residues asparagine 33, asparagine 48, and asparagine 106 are each glycosylated (N-linked (GlcNAc...) asparagine). The span at 44–57 (SESSNMSFNSGSEE) shows a compositional bias: low complexity. The tract at residues 44–67 (SESSNMSFNSGSEENSQEKSVEDL) is disordered. Transmembrane regions (helical) follow at residues 113–133 (ALIIIQTMLLTCVNYMGSSIY), 149–169 (VVGTLNLSLYVLGYGLGPIVF), 181–201 (LPVYMITFFLFTMLQIGCALA), 204–224 (FAGLVILRFITGVLCSPALST), 238–258 (LALVLGLWSIGAVAAPVLAPL), 271–291 (WIFWLLFFCCCATMLLLTFFF), 355–375 (LYIALCYGAFYLFFEAFPIVF), and 387–407 (GLAYFGFCVGCIFAYIILLVF). N-linked (GlcNAc...) asparagine glycosylation occurs at asparagine 418. Helical transmembrane passes span 426 to 446 (TLILAMCIGWCIPLALFMFGW), 450 to 470 (VHWILPIISEVFFVLGCFNIF), 484 to 506 (YVASVFAGNGFARSSFAAAFPLF), and 521 to 541 (VAWGSSLVGFFTIGLWVIPFV).

The protein belongs to the major facilitator superfamily.

The protein localises to the cell membrane. In terms of biological role, multidrug transporter that confers resistance to 5-flucytosine (5-FC) and clotrimazole. Also confers resistance to benomyl, but not 4-nitroquinoline-N-oxide, cycloheximide, or fluconazole. Plays direct roles in extrusion of 5-flucytosine and clotrimazole. The polypeptide is Multidrug transporter FLR1 (Candida glabrata (strain ATCC 2001 / BCRC 20586 / JCM 3761 / NBRC 0622 / NRRL Y-65 / CBS 138) (Yeast)).